The chain runs to 509 residues: 2,3-bisphosphoglycerate-independent phosphoglycerate mutase (509 aa).

Mn(2+) is bound by residues Asp14 and Ser64. Ser64 functions as the Phosphoserine intermediate in the catalytic mechanism. Substrate-binding positions include His125, 155-156 (RD), Arg187, Arg193, 259-262 (RADR), and Lys332. Residues Asp399, His403, Asp440, His441, and His459 each contribute to the Mn(2+) site.

This sequence belongs to the BPG-independent phosphoglycerate mutase family. Monomer. It depends on Mn(2+) as a cofactor.

The catalysed reaction is (2R)-2-phosphoglycerate = (2R)-3-phosphoglycerate. It participates in carbohydrate degradation; glycolysis; pyruvate from D-glyceraldehyde 3-phosphate: step 3/5. Catalyzes the interconversion of 2-phosphoglycerate and 3-phosphoglycerate. The sequence is that of 2,3-bisphosphoglycerate-independent phosphoglycerate mutase from Aeromonas salmonicida (strain A449).